A 375-amino-acid polypeptide reads, in one-letter code: MSDAKKLTGAGLRGQSAGETALSTVGVSGSGLTYRGYDVKDLAENATFEEVAYLILYGELPTTAQLAAYKTKLKGMRGLPQALKEVLERIPADAHPMDVMRTGCSMLGNLEAEHSFSEQSQIADRLLAAFPSIICYWYRFSHDGVRIDTETDDDQIGAHFLHLLHGKAPSALHTKVMDVSLILYAEHEFNASTFTARVCASTLSDMHSCVTGAIGSLRGPLHGGANEAAMELIQDMKDEADARDVLMGKLERKEKIMGFGHAIYRDSDPRNAIIKEWSEKLAADYGDDRLYRVSVACEALMWEQKKLFCNADFFHASAYHFMGIPTKLFTPIFVCSRVTGWTAHVMEQRSNNRIIRPSADYVGVSPRKVIPIANR.

Lysine 72 and histidine 187 together coordinate substrate. Histidine 222 is an active-site residue. 255-259 (KIMGF) contributes to the CoA binding site. Residue histidine 261 is part of the active site. Substrate is bound at residue arginine 270. Aspartate 312 is an active-site residue. Arginine 337 and arginine 356 together coordinate substrate.

Belongs to the citrate synthase family. As to quaternary structure, homodimer.

It catalyses the reaction propanoyl-CoA + oxaloacetate + H2O = (2S,3S)-2-methylcitrate + CoA + H(+). The enzyme catalyses oxaloacetate + acetyl-CoA + H2O = citrate + CoA + H(+). It functions in the pathway organic acid metabolism; propanoate degradation. The protein operates within carbohydrate metabolism; tricarboxylic acid cycle; isocitrate from oxaloacetate: step 1/2. Functionally, involved in the catabolism of short chain fatty acids (SCFA) via the tricarboxylic acid (TCA)(acetyl degradation route) and via the 2-methylcitrate cycle II (propionate degradation route). Catalyzes the Claisen condensation of propionyl-CoA and oxaloacetate (OAA) to yield 2-methylcitrate (2-MC) and CoA. Catalyzes the condensation of oxaloacetate with acetyl-CoA. The chain is 2-methylcitrate synthase (prpC) from Shewanella oneidensis (strain ATCC 700550 / JCM 31522 / CIP 106686 / LMG 19005 / NCIMB 14063 / MR-1).